A 102-amino-acid polypeptide reads, in one-letter code: Large ribosomal subunit protein bL21 (102 aa).

The protein belongs to the bacterial ribosomal protein bL21 family. Part of the 50S ribosomal subunit. Contacts protein L20.

This protein binds to 23S rRNA in the presence of protein L20. The protein is Large ribosomal subunit protein bL21 of Sorangium cellulosum (strain So ce56) (Polyangium cellulosum (strain So ce56)).